Here is a 439-residue protein sequence, read N- to C-terminus: Divalent metal cation transporter MntH (439 aa).

The next 11 membrane-spanning stretches (helical) occupy residues 32-52 (GASMLLPFAGPAVVVSVAYMD), 67-87 (GYALLWVVLLANVVAMLFQSL), 121-141 (IAAMATDLAAFLGGAIGLSLL), 144-164 (MPLLGGMVVTAIVTYGLLLLE), 173-193 (LAIGALVGIIGLSYLAELFIT), 214-234 (ALLIAVGIVGATVMPHALFLH), 261-281 (VVVALAIAGLINMAMVIMAAG), 301-321 (APLLGIGAAGVFLLSLIASGI), 350-370 (AVTMAPSFAVVALGVNVTQAL), 371-391 (VLSQVVLSLALPLPMAALLWF), and 406-426 (FIAVIATLAACAVLAFNAVLI).

Belongs to the NRAMP family.

It localises to the cell inner membrane. In terms of biological role, h(+)-stimulated, divalent metal cation uptake system. The sequence is that of Divalent metal cation transporter MntH from Verminephrobacter eiseniae (strain EF01-2).